A 301-amino-acid chain; its full sequence is MSEDEEKVKLRRLEPAIQKFTKIVIPTDLERLKKHQINIEKYQRCRIWDKLHEEHINAGRTVQQLRSNIREMEKLCLKVHKDDLILLKRMIDPMKEAAAAATAEFLQLHLESVEELKKQVKNEEALLQPSLTRSTTIDGVHTGEAEAASQSLTQIYALPEIPRDQNAAESWETLEADLIELSHLVTDMSLLVNSQQEKIDSIADHVNSAAVNVEEGTKNLQKAAKYKLAALPVAGAVIGGVVGGPIGLLAGFKVAGIAAALGGGVLGFTGGKLIQRRKQKMMEKLTSSCPDLPSQSDKKCS.

Ser-2 carries the post-translational modification N-acetylserine. The Cytoplasmic segment spans residues 2–227 (SEDEEKVKLR…KNLQKAAKYK (226 aa)). Lys-41 carries the N6-acetyllysine modification. The stretch at 49–128 (DKLHEEHINA…QVKNEEALLQ (80 aa)) forms a coiled coil. Tyr-156 is modified (phosphotyrosine; by ABL1). The t-SNARE coiled-coil homology domain occupies 161-223 (IPRDQNAAES…EEGTKNLQKA (63 aa)). Residues 228–248 (LAALPVAGAVIGGVVGGPIGL) traverse the membrane as a helical segment. The interval 228-274 (LAALPVAGAVIGGVVGGPIGLLAGFKVAGIAAALGGGVLGFTGGKLI) is necessary and sufficient for localization to autophagosome. Over 249-253 (LAGFK) the chain is Lumenal. A helical transmembrane segment spans residues 254–274 (VAGIAAALGGGVLGFTGGKLI). The tract at residues 273–301 (LIQRRKQKMMEKLTSSCPDLPSQSDKKCS) is required for interaction with COPB1, TMED9 and TMED10. The Cytoplasmic portion of the chain corresponds to 275 to 301 (QRRKQKMMEKLTSSCPDLPSQSDKKCS). Position 288 is a phosphoserine (Ser-288). Residues 298 to 301 (KKCS) carry the Endoplasmic reticulum retention signal motif.

It belongs to the syntaxin family. Forms a SNARE complex composed of VAMP8, SNAP29 and STX17 involved in fusion of autophagosome with lysosome. May interact with VAMP7. May interact with VTI1B. Probably interacts with BET1, SCFD1 and SEC22B. Interacts with PTPN2 and ABL1; involved in STX17 phosphorylation. Interacts with COPB1. Interacts with TMED9 and TMED10; the interaction is direct. Interacts with RUBCNL/PACER; promoting targeting of RUBCNL/PACER to autophagosome. Interacts with VAMP8, SNAP29, VPS39 and VPS41; these interactions are increased in the absence of TMEM39A. Interacts with IRGM; promoting STX17 recruitment to autophagosomes. Interacts with ATG8 proteins GABARAP and MAP1LC3B. Interacts with RNF115; this interaction enhances STX17 stability which in turn promotes autophagosome maturation. Interacts with RAB39A (GTP-bound); the interaction promotes autophagosome-lysosome membrane fusion driven by STX17-SNAP29-VAMP8. Interacts with RAB39B; the interaction may promote a different fonction in autophagy as compared with RAB39A. Phosphorylated at Tyr-156 probably by ABL1. Dephosphorylation by PTPN2; regulates exit from the endoplasmic reticulum. As to expression, detected in all tissues examined with higher expression in steroidogenic tissues including testis and adrenal gland (at protein level). Highly expressed in liver and testis. Also found in brain, heart, kidney, lung, placenta, skeletal muscle and spleen.

It localises to the endoplasmic reticulum membrane. It is found in the smooth endoplasmic reticulum membrane. The protein localises to the endoplasmic reticulum-Golgi intermediate compartment membrane. Its subcellular location is the cytoplasmic vesicle. The protein resides in the autophagosome membrane. It localises to the COPII-coated vesicle membrane. It is found in the cytoplasm. The protein localises to the cytosol. Its subcellular location is the mitochondrion membrane. The protein resides in the autolysosome membrane. Its function is as follows. SNAREs, soluble N-ethylmaleimide-sensitive factor-attachment protein receptors, are essential proteins for fusion of cellular membranes. SNAREs localized on opposing membranes assemble to form a trans-SNARE complex, an extended, parallel four alpha-helical bundle that drives membrane fusion. STX17 is a SNARE of the autophagosome involved in autophagy through the direct control of autophagosome membrane fusion with the lysosome membrane. May also play a role in the early secretory pathway where it may maintain the architecture of the endoplasmic reticulum-Golgi intermediate compartment/ERGIC and Golgi and/or regulate transport between the endoplasmic reticulum, the ERGIC and the Golgi. The sequence is that of Syntaxin-17 from Rattus norvegicus (Rat).